Consider the following 432-residue polypeptide: Tyrosine-protein phosphatase non-receptor type 1 (432 aa).

The residue at position 1 (M1) is an N-acetylmethionine. The Tyrosine-protein phosphatase domain occupies 3–277 (MEKEFEEIDK…RFSYLAVIEG (275 aa)). Y20 carries the post-translational modification Phosphotyrosine. Residue S50 is modified to Phosphoserine; by CLK1, CLK2 and PKB/AKT1 or PKB/AKT2. Y66 is modified (phosphotyrosine; by EGFR). Residues D181 and 215 to 221 (CSAGIGR) each bind substrate. C215 functions as the Phosphocysteine intermediate in the catalytic mechanism. The residue at position 215 (C215) is a Cysteine persulfide. S-nitrosocysteine; in reversibly inhibited form is present on C215. Residues S242 and S243 each carry the phosphoserine; by CLK1 and CLK2 modification. A substrate-binding site is contributed by Q262. Disordered regions lie at residues 297 to 322 (EDLD…PHNG) and 335 to 399 (SEET…EEHK). Phosphoserine occurs at positions 335, 362, and 364. The segment covering 354–364 (SSAMHSVSSMS) has biased composition (low complexity). T367 carries the phosphothreonine modification.

Belongs to the protein-tyrosine phosphatase family. Non-receptor class 1 subfamily. As to quaternary structure, interacts with EPHA3 (phosphorylated); dephosphorylates EPHA3 and may regulate its trafficking and function. Interacts with MET. Interacts with NCK1. In terms of processing, ser-50 is the major site of phosphorylation as compared to Ser-242 and Ser-243. Activated by phosphorylation at Ser-50. Post-translationally, S-nitrosylation of Cys-215 inactivates the enzyme activity. Sulfhydration at Cys-215 following endoplasmic reticulum stress inactivates the enzyme activity, promoting EIF2AK3/PERK activity. In terms of tissue distribution, most abundant in testis. Also found in kidney, spleen, muscle, liver, heart and brain.

It localises to the endoplasmic reticulum membrane. It carries out the reaction O-phospho-L-tyrosyl-[protein] + H2O = L-tyrosyl-[protein] + phosphate. Functionally, tyrosine-protein phosphatase which acts as a regulator of endoplasmic reticulum unfolded protein response. Mediates dephosphorylation of EIF2AK3/PERK; inactivating the protein kinase activity of EIF2AK3/PERK. May play an important role in CKII- and p60c-src-induced signal transduction cascades. May regulate the EFNA5-EPHA3 signaling pathway which modulates cell reorganization and cell-cell repulsion. May also regulate the hepatocyte growth factor receptor signaling pathway through dephosphorylation of MET. This is Tyrosine-protein phosphatase non-receptor type 1 (Ptpn1) from Mus musculus (Mouse).